We begin with the raw amino-acid sequence, 363 residues long: Serine/threonine-protein kinase SRK2A (363 aa).

A Protein kinase domain is found at 4-260; sequence YELVKDIGAG…IAEIKKHSWF (257 aa). Residues 10-18 and K33 each bind ATP; that span reads IGAGNFGVA. D123 functions as the Proton acceptor in the catalytic mechanism. The disordered stretch occupies residues 306 to 363; it reads SRSIGGFGWGGNGDADGKEEDAEDVEEEEEEVEEEEDDEDEYDKTVKEVHASGEVRIS. Residues 310–319 are compositionally biased toward gly residues; the sequence is GGFGWGGNGD. The span at 322 to 347 shows a compositional bias: acidic residues; sequence GKEEDAEDVEEEEEEVEEEEDDEDEY. A compositionally biased stretch (basic and acidic residues) spans 348 to 363; sequence DKTVKEVHASGEVRIS.

The protein belongs to the protein kinase superfamily. Ser/Thr protein kinase family. Interacts with TOPP1. Expressed in seedlings.

The catalysed reaction is L-seryl-[protein] + ATP = O-phospho-L-seryl-[protein] + ADP + H(+). It catalyses the reaction L-threonyl-[protein] + ATP = O-phospho-L-threonyl-[protein] + ADP + H(+). The protein is Serine/threonine-protein kinase SRK2A (SRK2A) of Arabidopsis thaliana (Mouse-ear cress).